Reading from the N-terminus, the 305-residue chain is Translation initiation factor eIF2B subunit alpha (305 aa).

Position 2 is an N-acetylserine (Ser-2). Thr-291 is subject to Phosphothreonine.

The protein belongs to the eIF-2B alpha/beta/delta subunits family. Component of the translation initiation factor 2B (eIF2B) complex which is a heterodecamer of two sets of five different subunits: alpha, beta, gamma, delta and epsilon. Subunits alpha, beta and delta comprise a regulatory subcomplex and subunits epsilon and gamma comprise a catalytic subcomplex. Within the complex, the hexameric regulatory complex resides at the center, with the two heterodimeric catalytic subcomplexes bound on opposite sides.

It localises to the cytoplasm. Its subcellular location is the cytosol. Its function is as follows. Acts as a component of the translation initiation factor 2B (eIF2B) complex, which catalyzes the exchange of GDP for GTP on the eukaryotic initiation factor 2 (eIF2) complex gamma subunit. Its guanine nucleotide exchange factor activity is repressed when bound to eIF2 complex phosphorylated on the alpha subunit, thereby limiting the amount of methionyl-initiator methionine tRNA available to the ribosome and consequently global translation is repressed. It activates the translation of GCN4 in response to low amino acid, carbon, or purine availability, by suppressing the inhibitory effects of multiple uORFs present in the leader of GCN4 mRNA. It may promote either repression or activation of GCN4 expression depending on amino acid availability. Modulation of GCN3 regulatory function in response to amino acid availability occurs post-translationally. The protein is Translation initiation factor eIF2B subunit alpha of Saccharomyces cerevisiae (strain ATCC 204508 / S288c) (Baker's yeast).